Here is a 793-residue protein sequence, read N- to C-terminus: uncharacterized protein (793 aa).

Positions 1 to 22 (MKFKYGAIFFSGFLGLSAILAA) are cleaved as a signal peptide. A lipid anchor (N-palmitoyl cysteine) is attached at Cys23. A lipid anchor (S-diacylglycerol cysteine) is attached at Cys23. Disordered regions lie at residues 181 to 200 (LNQK…TLTV), 212 to 264 (KIED…DDQV), and 444 to 504 (KAPS…SNNN). The span at 212 to 227 (KIEDSAKANGKSDEKG) shows a compositional bias: basic and acidic residues. Polar residues predominate over residues 237–246 (ATFSLVQLKQ). Over residues 247–264 (TQEKTDDSQDTKNSDDQV) the composition is skewed to basic and acidic residues. Over residues 449-468 (NGENGQTNEGNSTNGEQNLL) the composition is skewed to polar residues. Residues 472 to 485 (EVKDDSKPKEEVKS) show a composition bias toward basic and acidic residues. Residues 491–504 (KESSQNQGKKSNNN) show a composition bias toward low complexity.

This sequence belongs to the MG185/MG260 family.

The protein resides in the cell membrane. This is an uncharacterized protein from Mycoplasma pneumoniae (strain ATCC 29342 / M129 / Subtype 1) (Mycoplasmoides pneumoniae).